We begin with the raw amino-acid sequence, 708 residues long: F-box only protein 43 (708 aa).

The interval 35–55 (MSQRHSGQAGTEAGNGADSPP) is disordered. S76 is modified (phosphoserine). T234 carries the post-translational modification Phosphothreonine. Residues 320 to 426 (PSPEVRGSIS…ISEGQLSSDE (107 aa)) form a disordered region. The segment covering 327–337 (SISTPEDSGFN) has biased composition (polar residues). Position 334 is a phosphoserine (S334). Positions 374-385 (KTRHLGRSRRLS) are enriched in basic residues. Residues 399-411 (EKQIVHPDSEKRA) are compositionally biased toward basic and acidic residues. Residues 490-547 (MGIEKLDILTELKYRNLKHILAMVLESLTAESLCSVWKVSRNWREIVVQDKNANRRRK) enclose the F-box domain. The ZBR-type zinc finger occupies 636-684 (ALKPCPRCQSPAKYQPYKKRGLCSRTACGFDFCVLCLCAYHGSEECSRG). Positions 640, 643, 658, 663, 668, 671, 676, and 681 each coordinate Zn(2+). Residues 682 to 708 (SRGAAKPRNRKDALPGSAQSKRNLKRL) form a disordered region.

Part of a SCF (SKP1-cullin-F-box) protein ligase complex. According to PubMed:34595750 interaction with SKP1 does not occur. Interacts with ANAPC2; the interaction is direct, ANAPC4, CDC16, CDC23; the interaction is direct, ANAPC10; the interaction is direct and CDC26, during spermatogenesis. May interact with CDC20. In terms of processing, phosphorylated on Ser-76, Thr-234 and Ser-334 in response to calcium, which is a prerequisite for ubiquitination and proteasomal degradation. Post-translationally, ubiquitinated in response to calcium, which promotes proteasomal degradation. Expressed in the testis.

Its pathway is protein modification; protein ubiquitination. Its function is as follows. Required to establish and maintain the arrest of oocytes at the second meiotic metaphase until fertilization. Acts by inhibiting the anaphase-promoting complex/cyclosome (APC/C) ubiquitin ligase. Probably recognizes and binds to some phosphorylated proteins and promotes their ubiquitination and degradation. Plays a vital role in modulating the ubiquitilation of CCNB1 and CDK1 during gametogenesis. This Homo sapiens (Human) protein is F-box only protein 43 (FBXO43).